The primary structure comprises 118 residues: MSRSLALVYLSLLCLQTHLSISVTVPIPSVNGEIDAMLNRNGVIGEEEGEEMMPSEISRRVMMMRKQYISYETLRRDMVPCQKPGASYYACRSGQANAYNRGCSVITRCARDTNDIKT.

An N-terminal signal peptide occupies residues 1–22; that stretch reads MSRSLALVYLSLLCLQTHLSIS. Positions 23 to 63 are cleaved as a propeptide — removed in mature form; that stretch reads VTVPIPSVNGEIDAMLNRNGVIGEEEGEEMMPSEISRRVMM. Intrachain disulfides connect cysteine 81–cysteine 91 and cysteine 103–cysteine 109.

Belongs to the plant rapid alkalinization factor (RALF) family. Proteolytically cleaved, probably by S1P, a subtilisin-like serine protease (subtilase).

It is found in the secreted. Cell signaling peptide that may regulate plant stress, growth, and development. Mediates a rapid alkalinization of extracellular space by mediating a transient increase in the cytoplasmic Ca(2+) concentration leading to a calcium-dependent signaling events through a cell surface receptor and a concomitant activation of some intracellular mitogen-activated protein kinases. The polypeptide is Protein RALF-like 24 (RALFL24) (Arabidopsis thaliana (Mouse-ear cress)).